Reading from the N-terminus, the 328-residue chain is Dihydroorotate dehydrogenase (quinone), mitochondrial (328 aa).

The chain crosses the membrane as a helical span at residues 21-38 (AHGLSIAGLKTGLVTGSA). Residues 61 to 65 (AGYDK) and Thr85 contribute to the FMN site. Lys65 contributes to the substrate binding site. 110-114 (NRLGF) is a substrate binding site. FMN contacts are provided by Asn139 and Asn170. Position 170–175 (170–175 (NISSPN)) interacts with substrate. Ser173 serves as the catalytic Nucleophile. Residues Lys215 and Ser243 each contribute to the FMN site. 244-245 (NT) serves as a coordination point for substrate. FMN contacts are provided by Gly266 and Gly295.

The protein belongs to the dihydroorotate dehydrogenase family. Type 2 subfamily. FMN is required as a cofactor.

It localises to the mitochondrion inner membrane. It catalyses the reaction (S)-dihydroorotate + a quinone = orotate + a quinol. Its pathway is pyrimidine metabolism; UMP biosynthesis via de novo pathway; orotate from (S)-dihydroorotate (quinone route): step 1/1. Catalyzes the conversion of dihydroorotate to orotate with quinone as electron acceptor. This chain is Dihydroorotate dehydrogenase (quinone), mitochondrial (URA1), found in Cyclocybe aegerita (Black poplar mushroom).